Reading from the N-terminus, the 318-residue chain is tRNA pseudouridine synthase B (318 aa).

The active-site Nucleophile is the Asp47.

Belongs to the pseudouridine synthase TruB family. Type 1 subfamily.

It catalyses the reaction uridine(55) in tRNA = pseudouridine(55) in tRNA. In terms of biological role, responsible for synthesis of pseudouridine from uracil-55 in the psi GC loop of transfer RNAs. The protein is tRNA pseudouridine synthase B of Aliivibrio salmonicida (strain LFI1238) (Vibrio salmonicida (strain LFI1238)).